Here is a 202-residue protein sequence, read N- to C-terminus: 7-methyl-GTP pyrophosphatase (202 aa).

Asp-70 serves as the catalytic Proton acceptor.

Belongs to the Maf family. YceF subfamily. Requires a divalent metal cation as cofactor.

The protein localises to the cytoplasm. It catalyses the reaction N(7)-methyl-GTP + H2O = N(7)-methyl-GMP + diphosphate + H(+). Nucleoside triphosphate pyrophosphatase that hydrolyzes 7-methyl-GTP (m(7)GTP). May have a dual role in cell division arrest and in preventing the incorporation of modified nucleotides into cellular nucleic acids. This Pseudoalteromonas translucida (strain TAC 125) protein is 7-methyl-GTP pyrophosphatase.